A 455-amino-acid chain; its full sequence is Golgi pH regulator (455 aa).

Helical transmembrane passes span 5–25 and 46–66; these read ADSV…WLFF and VTFA…LGLL. Asn67 is a glycosylation site (N-linked (GlcNAc...) asparagine). Helical transmembrane passes span 79-99, 111-131, and 150-170; these read LCVI…YFVV, LFSC…GDPF, and VGVI…VNCP. An N-linked (GlcNAc...) asparagine glycan is attached at Asn180. Transmembrane regions (helical) follow at residues 290 to 310, 343 to 363, 378 to 398, and 425 to 445; these read GYFF…NIVF, ISFI…LITL, VIVL…VLLI, and WFDV…YLAH.

This sequence belongs to the Golgi pH regulator (TC 1.A.38) family. In terms of assembly, homotrimer.

The protein resides in the golgi apparatus membrane. The catalysed reaction is iodide(out) = iodide(in). The enzyme catalyses chloride(in) = chloride(out). It catalyses the reaction bromide(in) = bromide(out). It carries out the reaction fluoride(in) = fluoride(out). Its function is as follows. Voltage-gated channel that enables the transfer of anions such as iodide, chloride, bromide and fluoride which may function in counter-ion conductance and participates in Golgi acidification. This chain is Golgi pH regulator (gpr89-b), found in Xenopus laevis (African clawed frog).